The primary structure comprises 80 residues: Large ribosomal subunit protein bL31 (80 aa).

Cys16, Cys18, Cys38, and Cys41 together coordinate Zn(2+).

It belongs to the bacterial ribosomal protein bL31 family. Type A subfamily. In terms of assembly, part of the 50S ribosomal subunit. Zn(2+) is required as a cofactor.

Functionally, binds the 23S rRNA. The sequence is that of Large ribosomal subunit protein bL31 from Mycobacterium bovis (strain ATCC BAA-935 / AF2122/97).